A 114-amino-acid polypeptide reads, in one-letter code: Cytochrome c oxidase subunit 7A2-like, mitochondrial (114 aa).

A mitochondrion-targeting transit peptide spans 1 to 55 (MYYKFSGFTQKLAGAWASEAYSPQGLKPVVSTEAPPIIFATPTKLTSDSTVYDYA). Lys-69 carries the N6-acetyllysine modification. A helical membrane pass occupies residues 82 to 107 (PDQMLYRTTMALTVGGTIYCLIALYM).

Belongs to the cytochrome c oxidase VIIa family. Interacts with the mitochondrial respiratory complexes III (CIII) and IV (CIV), promoting their association.

The protein localises to the mitochondrion inner membrane. Functionally, assembly factor that mediates the formation of some mitochondrial respiratory supercomplexes (respirasomes), thereby promoting oxidative phosphorylation and energy metabolism. Acts as a molecular adapter that associates with both mitochondrial respiratory complexes III (CIII) and IV (CIV), promoting their association. Mediates the formation of various mitochondrial respiratory supercomplexes, such as MCIII(2)IV(2), composed of two CIII and two CIV, and the CS-respirasome (MCI(1)III(2)IV(2)), composed of one CI, two CIII and two CIV. Not involved in the formation of the canonical respirasome (MCI(1)III(2)IV(1)), composed of one CI, two CIII and one CIV. The formation of different respirasomes is important for cell adaptation to oxygen conditions and prevent metabolic exhaustion: supercomplexes mediated by COX7A2L/SCAF1 are required to maintain oxidative phosphorylation upon low oxygen conditions and promote metabolic rewiring toward glycolysis. This chain is Cytochrome c oxidase subunit 7A2-like, mitochondrial, found in Homo sapiens (Human).